A 248-amino-acid polypeptide reads, in one-letter code: Fasciclin-like arabinogalactan protein 19 (248 aa).

The first 29 residues, 1–29 (MAKISSASCFRAIFLGALIILCLPHPSTG), serve as a signal peptide directing secretion. In terms of domain architecture, FAS1 spans 35 to 166 (LERAIAILRV…IAVHGLADLL (132 aa)). Residues N114 and N136 are each glycosylated (N-linked (GlcNAc...) asparagine). The span at 213–226 (SPSVEEVSPSPSWG) shows a compositional bias: low complexity. The disordered stretch occupies residues 213 to 248 (SPSVEEVSPSPSWGEGEEDFIVGDEGGPLDGRNNGF).

It belongs to the fasciclin-like AGP family.

It is found in the secreted. Functionally, may be a cell surface adhesion protein. This chain is Fasciclin-like arabinogalactan protein 19 (FLA19), found in Arabidopsis thaliana (Mouse-ear cress).